We begin with the raw amino-acid sequence, 460 residues long: Bifunctional beta-D-glucosidase/beta-D-fucosidase (460 aa).

Glu-168 (proton donor) is an active-site residue. Glu-362 functions as the Nucleophile in the catalytic mechanism.

This sequence belongs to the glycosyl hydrolase 1 family. Monomer.

It localises to the secreted. The catalysed reaction is Hydrolysis of terminal, non-reducing beta-D-glucosyl residues with release of beta-D-glucose.. It carries out the reaction Hydrolysis of terminal non-reducing beta-D-fucose residues in beta-D-fucosides.. With respect to regulation, inhibited by Cu(2+), Ag(+) and Hg(+), but not by other cations such as Mg(2+), Ca(2+), Mn(2+) and Co(2+). Inhibited by 1-amino-1-deoxy-D-glucose and p-chloromercuribenzoic acid, but not by EDTA or dithiothreitol. Inhibited by the disaccharides sucrose, lactose and cellobiose. The monosaccharides D-fructose, D-mannose, D-xylose and D-glucose increase the beta-D-fucosidase activity, but not the beta-D-glucosidase activity. D-glucose inhibits the beta-D-glucosidase activity, but promotes the beta-D-fucosidase activity. D-fucose inhibits the beta-D-glucosidase activity and does not significantly affect the beta-D-fucosidase activity. Bifunctional beta-D-glucosidase/beta-D-fucosidase. Activity towards pNP-beta-D-fucoside is about 80-85% of the activity towards pNP-beta-D-glucoside. Also has slight activity (less than 10%) towards pNP-beta-D-galactoside, and very low activity (less than 1%) towards pNP-beta-D-xyloside. Hydrolyzes laminaribiose, sophorose, cellobiose and gentobiose. Not active against maltose, pNP-alpha-D-glucoside or pNP-beta-L-fucoside. The sequence is that of Bifunctional beta-D-glucosidase/beta-D-fucosidase from Bifidobacterium breve.